The sequence spans 91 residues: Small ribosomal subunit protein bS16 (91 aa).

Belongs to the bacterial ribosomal protein bS16 family.

This chain is Small ribosomal subunit protein bS16, found in Levilactobacillus brevis (strain ATCC 367 / BCRC 12310 / CIP 105137 / JCM 1170 / LMG 11437 / NCIMB 947 / NCTC 947) (Lactobacillus brevis).